Here is a 150-residue protein sequence, read N- to C-terminus: Large ribosomal subunit protein uL15 (150 aa).

Residues 1–58 (MNLSGIKPPKGQVKTKKRIGRGMGSGHGKTATRGSKGQHAGTGFSQKRGFEGGQMPLH) form a disordered region.

It belongs to the universal ribosomal protein uL15 family. Part of the 50S ribosomal subunit.

In terms of biological role, binds to the 23S rRNA. The sequence is that of Large ribosomal subunit protein uL15 from Solibacter usitatus (strain Ellin6076).